We begin with the raw amino-acid sequence, 341 residues long: 4-amino-5-hydroxymethyl-2-methylpyrimidine phosphate synthase (341 aa).

The residue at position 62 (Lys-62) is an N6-(pyridoxal phosphate)lysine. His-66 is a catalytic residue. 115-118 (GEFG) is a pyridoxal 5'-phosphate binding site. Residues 195-199 (CCCFC) carry the CCCFC; essential for catalytic activity, may be the site of iron coordination motif.

This sequence belongs to the NMT1/THI5 family. In terms of assembly, homodimer. Fe cation is required as a cofactor.

The catalysed reaction is N(6)-(pyridoxal phosphate)-L-lysyl-[4-amino-5-hydroxymethyl-2-methylpyrimidine phosphate synthase] + L-histidyl-[4-amino-5-hydroxymethyl-2-methylpyrimidine phosphate synthase] + 2 Fe(3+) + 4 H2O = L-lysyl-[4-amino-5-hydroxymethyl-2-methylpyrimidine phosphate synthase] + (2S)-2-amino-5-hydroxy-4-oxopentanoyl-[4-amino-5-hydroxymethyl-2-methylpyrimidine phosphate synthase] + 4-amino-2-methyl-5-(phosphooxymethyl)pyrimidine + 3-oxopropanoate + 2 Fe(2+) + 2 H(+). It participates in cofactor biosynthesis; thiamine diphosphate biosynthesis. Functionally, responsible for the formation of the pyrimidine heterocycle in the thiamine biosynthesis pathway. Catalyzes the formation of hydroxymethylpyrimidine phosphate (HMP-P) from histidine and pyridoxal phosphate (PLP). The protein uses PLP and the active site histidine to form HMP-P, generating an inactive enzyme. The enzyme can only undergo a single turnover, which suggests it is a suicide enzyme. The chain is 4-amino-5-hydroxymethyl-2-methylpyrimidine phosphate synthase from Uromyces fabae (Rust fungus).